The following is a 268-amino-acid chain: Calpain small subunit 1 (268 aa).

An N-acetylmethionine modification is found at Met-1. Ser-6 bears the Phosphoserine mark. The 35-residue stretch at 91–125 (EANESEEVRQFRRLFAQLAGDDMEVSATELMNILN) folds into the EF-hand 1; atypical domain. Residues Ala-109, Asp-112, Glu-114, Glu-119, Asp-137, Asp-152, Asp-154, Thr-156, Lys-158, and Glu-163 each coordinate Ca(2+). EF-hand domains are found at residues 139-172 (FGID…NNIK), 169-204 (NNIK…AGFH), 205-233 (LNEH…ISCL), and 234-268 (VRLD…TMYS). Lys-179 carries the post-translational modification N6-acetyllysine. Residues Asp-182, Asp-184, Ser-186, Thr-188, Glu-193, and Asp-225 each coordinate Ca(2+).

Homodimer or heterodimer of a large (catalytic) and a small (regulatory) subunit. In presence of calcium, the heterodimer dissociates.

It is found in the cytoplasm. It localises to the cell membrane. In terms of biological role, regulatory subunit of the calcium-regulated non-lysosomal thiol-protease which catalyzes limited proteolysis of substrates involved in cytoskeletal remodeling and signal transduction. Essential for embryonic development. This is Calpain small subunit 1 (CAPNS1) from Homo sapiens (Human).